The following is a 336-amino-acid chain: MAVIYYDKDADLNLIKDKKIAIIGYGSQGHAHALNLKDSGLNVVVGLREGSKSWKKAEEQGLTVKTIEEAAKEADIIMILIPDEHQPEIYKKYIEKHLTEGKMLMFAHGFNIHYHQIIPPKNVDVTMIAPKSPGHIVRREYVEGRGVPALVAVYQDYTGKAKDIALAYAKGIGVTRAGVIETTFKEETETDLFGEQAVLCGGVTALIKAGFETLVDAGYQPEIAYFECLNELKLIVDLIYEGGLSFMRYSVSNTAEYGDYISQEKIVTKEVRENMKQMLKDIQTGKFAKDWILENQAGRPYFYTMRKKESEHLIEKVGKELRKMMPWLKERNVDEE.

One can recognise a KARI N-terminal Rossmann domain in the interval 1–182 (MAVIYYDKDA…GVTRAGVIET (182 aa)). NADP(+)-binding positions include 25-28 (YGSQ), R48, S51, S53, and 83-86 (DEHQ). Residue H108 is part of the active site. G134 provides a ligand contact to NADP(+). Residues 183 to 328 (TFKEETETDL…KELRKMMPWL (146 aa)) enclose the KARI C-terminal knotted domain. Mg(2+) is bound by residues D191, E195, E227, and E231. S252 lines the substrate pocket.

The protein belongs to the ketol-acid reductoisomerase family. Mg(2+) is required as a cofactor.

It catalyses the reaction (2R)-2,3-dihydroxy-3-methylbutanoate + NADP(+) = (2S)-2-acetolactate + NADPH + H(+). It carries out the reaction (2R,3R)-2,3-dihydroxy-3-methylpentanoate + NADP(+) = (S)-2-ethyl-2-hydroxy-3-oxobutanoate + NADPH + H(+). Its pathway is amino-acid biosynthesis; L-isoleucine biosynthesis; L-isoleucine from 2-oxobutanoate: step 2/4. The protein operates within amino-acid biosynthesis; L-valine biosynthesis; L-valine from pyruvate: step 2/4. Functionally, involved in the biosynthesis of branched-chain amino acids (BCAA). Catalyzes an alkyl-migration followed by a ketol-acid reduction of (S)-2-acetolactate (S2AL) to yield (R)-2,3-dihydroxy-isovalerate. In the isomerase reaction, S2AL is rearranged via a Mg-dependent methyl migration to produce 3-hydroxy-3-methyl-2-ketobutyrate (HMKB). In the reductase reaction, this 2-ketoacid undergoes a metal-dependent reduction by NADPH to yield (R)-2,3-dihydroxy-isovalerate. The sequence is that of Ketol-acid reductoisomerase (NADP(+)) from Thermotoga maritima (strain ATCC 43589 / DSM 3109 / JCM 10099 / NBRC 100826 / MSB8).